Reading from the N-terminus, the 753-residue chain is Protein transport protein SEC23-1 (753 aa).

Positions 56, 61, 80, and 83 each coordinate Zn(2+).

It belongs to the SEC23/SEC24 family. SEC23 subfamily. In terms of assembly, the COPII coat is composed of at least 5 proteins: the SEC23/24 complex, the SEC13/31 complex, and the protein SAR1.

Its subcellular location is the cytoplasm. The protein resides in the cytoplasmic vesicle. It localises to the COPII-coated vesicle membrane. The protein localises to the endoplasmic reticulum membrane. It is found in the golgi apparatus membrane. Its function is as follows. Component of the coat protein complex II (COPII) which promotes the formation of transport vesicles from the endoplasmic reticulum (ER). The coat has two main functions, the physical deformation of the endoplasmic reticulum membrane into vesicles and the selection of cargo molecules. The polypeptide is Protein transport protein SEC23-1 (SEC231) (Candida glabrata (strain ATCC 2001 / BCRC 20586 / JCM 3761 / NBRC 0622 / NRRL Y-65 / CBS 138) (Yeast)).